Consider the following 524-residue polypeptide: Probable inorganic phosphate transporter 1-2 (524 aa).

Residues 1–24 (MAEQQLGVLKALDVAKTQLYHFTA) lie on the Cytoplasmic side of the membrane. Residues 25–45 (IVIAGMGFFTDAYDLFCVSLV) form a helical membrane-spanning segment. Residues 46-70 (TKLLGRIYYFNPESAKPGSLPPHVA) lie on the Extracellular side of the membrane. The chain crosses the membrane as a helical span at residues 71–91 (AAVNGVALCGTLSGQLFFGWL). At 92–99 (GDKLGRKK) the chain is on the cytoplasmic side. Residues 100 to 120 (VYGLTLIMMILCSVASGLSFG) traverse the membrane as a helical segment. Residues 121–131 (NEAKGVMTTLC) lie on the Extracellular side of the membrane. Residues 132–152 (FFRFWLGFGIGGDYPLSATIM) traverse the membrane as a helical segment. At 153 to 161 (SEYANKKTR) the chain is on the cytoplasmic side. The helical transmembrane segment at 162 to 182 (GAFIAAVFAMQGVGILAGGFV) threads the bilayer. The Extracellular portion of the chain corresponds to 183–211 (ALAVSSIFDKKFPAPTYAVNRALSTPPQV). Residues 212 to 232 (DYIWRIIVMFGALPAALTYYW) traverse the membrane as a helical segment. Residues 233–292 (RMKMPETARYTALVAKNIKQATADMSKVLQTDIELEERVEDDVKDPRQNYGLFSKEFLRR) are Cytoplasmic-facing. A helical membrane pass occupies residues 293–313 (HGLHLLGTTSTWFLLDIAFYS). Residues 314–348 (QNLFQKDIFSAIGWIPKAATMNATHEVFRIARAQT) are Extracellular-facing. The helical transmembrane segment at 349–369 (LIALCSTVPGYWFTVAFIDTI) threads the bilayer. The Cytoplasmic segment spans residues 370–371 (GR). A helical membrane pass occupies residues 372-392 (FKIQLNGFFMMTVFMFAIAFP). Over 393–402 (YNHWIKPENR) the chain is Extracellular. Residues 403–423 (IGFVVMYSLTFFFANFGPNAT) form a helical membrane-spanning segment. Residues 424–441 (TFIVPAEIFPARLRSTCH) lie on the Cytoplasmic side of the membrane. A helical transmembrane segment spans residues 442–462 (GISAAAGKAGAIIGAFGFLYA). Over 463–484 (AQNQDKAKVDAGYPPGIGVKNS) the chain is Extracellular. A helical transmembrane segment spans residues 485–505 (LIVLGVLNFIGMLFTFLVPEP). At 506–524 (KGKSLEELSGEAEVSHDEK) the chain is on the cytoplasmic side.

It belongs to the major facilitator superfamily. Phosphate:H(+) symporter (TC 2.A.1.9) family. As to expression, root specific, especially in trichoblasts. In mature plants, localized in root cortical cells and young lateral roots.

It localises to the membrane. In terms of biological role, high-affinity transporter for external inorganic phosphate. In Arabidopsis thaliana (Mouse-ear cress), this protein is Probable inorganic phosphate transporter 1-2 (PHT1-2).